A 212-amino-acid chain; its full sequence is Holliday junction branch migration complex subunit RuvA (212 aa).

Residues 1–66 form a domain I region; sequence MISGLKGTLK…ERGQKLFGFL (66 aa). The domain II stretch occupies residues 67–145; that stretch reads TEQDKEFFKV…KLELFLSGTS (79 aa). Residues 146–162 are flexible linker; sequence KEPSISLSSFSETPEEA. Residues 163-212 form a domain III region; the sequence is ALSRKREIAILGLVQLGFEEKTASKEVDKILKSSSPTDPGEIIREILKSL.

This sequence belongs to the RuvA family. As to quaternary structure, homotetramer. Forms an RuvA(8)-RuvB(12)-Holliday junction (HJ) complex. HJ DNA is sandwiched between 2 RuvA tetramers; dsDNA enters through RuvA and exits via RuvB. An RuvB hexamer assembles on each DNA strand where it exits the tetramer. Each RuvB hexamer is contacted by two RuvA subunits (via domain III) on 2 adjacent RuvB subunits; this complex drives branch migration. In the full resolvosome a probable DNA-RuvA(4)-RuvB(12)-RuvC(2) complex forms which resolves the HJ.

Its subcellular location is the cytoplasm. Its function is as follows. The RuvA-RuvB-RuvC complex processes Holliday junction (HJ) DNA during genetic recombination and DNA repair, while the RuvA-RuvB complex plays an important role in the rescue of blocked DNA replication forks via replication fork reversal (RFR). RuvA specifically binds to HJ cruciform DNA, conferring on it an open structure. The RuvB hexamer acts as an ATP-dependent pump, pulling dsDNA into and through the RuvAB complex. HJ branch migration allows RuvC to scan DNA until it finds its consensus sequence, where it cleaves and resolves the cruciform DNA. This is Holliday junction branch migration complex subunit RuvA from Leptospira borgpetersenii serovar Hardjo-bovis (strain JB197).